Reading from the N-terminus, the 314-residue chain is 4-diphosphocytidyl-2-C-methyl-D-erythritol kinase (314 aa).

K11 is a catalytic residue. 99 to 109 (PMAAGLAGGST) contributes to the ATP binding site. D141 is an active-site residue.

It belongs to the GHMP kinase family. IspE subfamily.

The catalysed reaction is 4-CDP-2-C-methyl-D-erythritol + ATP = 4-CDP-2-C-methyl-D-erythritol 2-phosphate + ADP + H(+). Its pathway is isoprenoid biosynthesis; isopentenyl diphosphate biosynthesis via DXP pathway; isopentenyl diphosphate from 1-deoxy-D-xylulose 5-phosphate: step 3/6. Catalyzes the phosphorylation of the position 2 hydroxy group of 4-diphosphocytidyl-2C-methyl-D-erythritol. In Trichodesmium erythraeum (strain IMS101), this protein is 4-diphosphocytidyl-2-C-methyl-D-erythritol kinase.